The chain runs to 542 residues: MNPFVNLFIQHSKKQIFLNNNKNNILLNFNSKLYSTITYKNNNNNNNNQIINNKTIMKRKNNEIIQTEEDDDNDNGGIHDCDSCDEVDNEEIIPESPPSKKLQQQQQQQQQQQSKLKPKQTSITDFFSPTVKTSKADKISPFFSNVNNASTTNTTTNNKNVNKKTTTTTTTKKRNNKDEENEDDNEEEEEEEEEEEDKKSKKKTTTTTTTTTTTAYKKKSSPKKKKVNPTENKFSTINYKDDQYVQKEEYSSSKKEKLENVKIGGHVSIKNGYPTLIQSVVAQGFKAVAFFTNPPRTWKHHTVKLDDSIKFKQSCKSLNFDVNCILPHGSYFLNLGSPNKENLQKSRDLMIHEMKNCEILGVKHFNFHPGSHLNEISESESIKIVAESLDYILERTKDVVAVIECTAGQGTNLGYTFEHLRDMIALVKDKTRVGVCLDTCHMFAAGYNISTKSNCDVIFQEFDKVVGFKYLKGVHLNDSKSTCGSKLDRHENIGKGHIGTPCFKYLVNDKRFQNIPMILETVGPYDQEVKLLYSFIEDDDKK.

Disordered regions lie at residues 89 to 123 and 141 to 234; these read NEEI…QTSI and PFFS…ENKF. Composition is skewed to low complexity over residues 99–115 and 147–170; these read SKKL…QQSK and NNAS…TTTT. Residues 171 to 206 are a coiled coil; sequence TKKRNNKDEENEDDNEEEEEEEEEEEDKKSKKKTTT. Positions 179–196 are enriched in acidic residues; that stretch reads EENEDDNEEEEEEEEEEE. A compositionally biased stretch (low complexity) spans 205-215; the sequence is TTTTTTTTTTA. Over residues 216-227 the composition is skewed to basic residues; that stretch reads YKKKSSPKKKKV. Residues 222–227 carry the Nuclear localization signal motif; sequence PKKKKV. Histidine 328, histidine 368, glutamate 404, aspartate 438, histidine 441, histidine 475, aspartate 488, histidine 490, and glutamate 520 together coordinate Zn(2+).

It belongs to the AP endonuclease 2 family. The cofactor is Zn(2+).

The protein localises to the nucleus. The enzyme catalyses Endonucleolytic cleavage to 5'-phosphooligonucleotide end-products.. Plays a role in DNA repair. It cleaves phosphodiester bonds at apurinic or apyrimidinic sites (AP sites) to produce new 5'-ends that are base-free deoxyribose 5-phosphate residues. The sequence is that of Endonuclease 4 homolog (apnA) from Dictyostelium discoideum (Social amoeba).